Here is a 672-residue protein sequence, read N- to C-terminus: Inner kinetochore subunit mis6 (672 aa).

The protein belongs to the CENP-I/CTF3 family. Component of the inner kinetochore constitutive centromere-associated network (CCAN) (also known as central kinetochore Sim4 complex in fission yeast), which is composed of at least cnl2, cnp3, cnp20, fta1, fta2, fta3, fta4, fta6, fta7, mal2, mhf1, mhf2, mis6, mis15, mis17, sim4 and wip1. Interacts with cnp1, sim4, mis15 and mis17.

The protein resides in the nucleus. It is found in the chromosome. It localises to the centromere. Functionally, component of the kinetochore, a multiprotein complex that assembles on centromeric DNA and attaches chromosomes to spindle microtubules, mediating chromosome segregation and sister chromatid segregation during meiosis and mitosis. Component of the inner kinetochore constitutive centromere-associated network (CCAN), which serves as a structural platform for outer kinetochore assembly. Required for the localization of cnp1 to the centromere. The protein is Inner kinetochore subunit mis6 (mis6) of Schizosaccharomyces pombe (strain 972 / ATCC 24843) (Fission yeast).